Consider the following 158-residue polypeptide: MRIGHGYDVHKLVEGRKLIMGGVDIPWEKGLLGHSDADVLLHAIADAILGALGEGDIGKHFPDTDPAYKGADSLKLLEHVANLAIAKGYCLGNLDATIIAQRPKMAPHIPAMRENIARVLRSTVDRVNVKATTEEGLSFTGRGEGISAHAVVLMIGKG.

Positions 8 and 10 each coordinate a divalent metal cation. 4-CDP-2-C-methyl-D-erythritol 2-phosphate is bound by residues Asp-8 to His-10 and His-34 to Ser-35. His-42 lines the a divalent metal cation pocket. Residues Asp-56–Gly-58, Phe-61–Asp-65, Ala-100–Ala-106, Thr-132–Glu-135, Phe-139, and Arg-142 each bind 4-CDP-2-C-methyl-D-erythritol 2-phosphate.

It belongs to the IspF family. In terms of assembly, homotrimer. A divalent metal cation serves as cofactor.

The enzyme catalyses 4-CDP-2-C-methyl-D-erythritol 2-phosphate = 2-C-methyl-D-erythritol 2,4-cyclic diphosphate + CMP. Its pathway is isoprenoid biosynthesis; isopentenyl diphosphate biosynthesis via DXP pathway; isopentenyl diphosphate from 1-deoxy-D-xylulose 5-phosphate: step 4/6. Its function is as follows. Involved in the biosynthesis of isopentenyl diphosphate (IPP) and dimethylallyl diphosphate (DMAPP), two major building blocks of isoprenoid compounds. Catalyzes the conversion of 4-diphosphocytidyl-2-C-methyl-D-erythritol 2-phosphate (CDP-ME2P) to 2-C-methyl-D-erythritol 2,4-cyclodiphosphate (ME-CPP) with a corresponding release of cytidine 5-monophosphate (CMP). In Pelobacter propionicus (strain DSM 2379 / NBRC 103807 / OttBd1), this protein is 2-C-methyl-D-erythritol 2,4-cyclodiphosphate synthase.